The primary structure comprises 417 residues: Serine hydroxymethyltransferase 2 (417 aa).

(6S)-5,6,7,8-tetrahydrofolate-binding positions include Leu121 and 125–127 (GHL). At Lys230 the chain carries N6-(pyridoxal phosphate)lysine. 355-357 (SPF) provides a ligand contact to (6S)-5,6,7,8-tetrahydrofolate.

It belongs to the SHMT family. As to quaternary structure, homodimer. It depends on pyridoxal 5'-phosphate as a cofactor.

It localises to the cytoplasm. It carries out the reaction (6R)-5,10-methylene-5,6,7,8-tetrahydrofolate + glycine + H2O = (6S)-5,6,7,8-tetrahydrofolate + L-serine. It participates in one-carbon metabolism; tetrahydrofolate interconversion. Its pathway is amino-acid biosynthesis; glycine biosynthesis; glycine from L-serine: step 1/1. In terms of biological role, catalyzes the reversible interconversion of serine and glycine with tetrahydrofolate (THF) serving as the one-carbon carrier. This reaction serves as the major source of one-carbon groups required for the biosynthesis of purines, thymidylate, methionine, and other important biomolecules. Also exhibits THF-independent aldolase activity toward beta-hydroxyamino acids, producing glycine and aldehydes, via a retro-aldol mechanism. This chain is Serine hydroxymethyltransferase 2, found in Pseudomonas syringae pv. syringae (strain B728a).